Here is a 351-residue protein sequence, read N- to C-terminus: Dihydroorotate dehydrogenase (quinone) (351 aa).

Residues 61-65 (AGLDK) and Thr85 contribute to the FMN site. Lys65 contacts substrate. Position 110 to 114 (110 to 114 (NRMGF)) interacts with substrate. FMN is bound by residues Asn139 and Asn172. Asn172 contributes to the substrate binding site. The active-site Nucleophile is Ser175. A substrate-binding site is contributed by Asn177. FMN contacts are provided by Lys217 and Thr245. 246–247 (NT) contributes to the substrate binding site. FMN contacts are provided by residues Gly268, Gly297, and 318–319 (YS).

The protein belongs to the dihydroorotate dehydrogenase family. Type 2 subfamily. Monomer. Requires FMN as cofactor.

The protein localises to the cell membrane. It carries out the reaction (S)-dihydroorotate + a quinone = orotate + a quinol. It participates in pyrimidine metabolism; UMP biosynthesis via de novo pathway; orotate from (S)-dihydroorotate (quinone route): step 1/1. Functionally, catalyzes the conversion of dihydroorotate to orotate with quinone as electron acceptor. The polypeptide is Dihydroorotate dehydrogenase (quinone) (Xanthomonas campestris pv. campestris (strain 8004)).